The following is a 540-amino-acid chain: Telomerase Cajal body protein 1 (540 aa).

A compositionally biased stretch (pro residues) spans 1-10 (MKTPEAPPLA). The interval 1–126 (MKTPEAPPLA…GEDVEGVSEE (126 aa)) is disordered. A phosphoserine mark is found at S26, S30, S54, S64, S85, and S90. Residues 116-126 (PGEDVEGVSEE) show a composition bias toward acidic residues. WD repeat units follow at residues 158–197 (QPEN…YNEG), 213–258 (EGDT…LRAS), 263–304 (NHLD…RDCE), 314–355 (GQSG…ALLG), 356–396 (GHQG…HPLW), and 402–441 (VTTN…LESK). T480 is subject to Phosphothreonine. S482 is subject to Phosphoserine. The tract at residues 520–540 (SDAHQEEMGQGRTEGGGGEFT) is disordered. The segment covering 531–540 (RTEGGGGEFT) has biased composition (gly residues).

It belongs to the TCAB1 family. As to quaternary structure, component of the telomerase holoenzyme complex composed of one molecule of TERT, one molecule of WRAP53/TCAB1, two molecules of H/ACA ribonucleoprotein complex subunits DKC1, NOP10, NHP2 and GAR1, and a telomerase RNA template component (TERC). The telomerase holoenzyme complex is associated with TEP1, SMG6/EST1A and POT1. Interacts with the chaperonin-containing T-complex (TRiC) complex; which mediates the folding of WRAP53/TCAB1. Interacts with COIL. Interacts with SMN1. Interacts with RNF8. Interacts with histone H2AX. Phosphorylated at Ser-64 by ATM in response to DNA damage, promoting its interaction with histone H2AX and localization to sites of DNA double-strand breaks.

It is found in the nucleus. It localises to the cajal body. The protein resides in the chromosome. The protein localises to the telomere. Functionally, RNA chaperone that plays a key role in telomere maintenance and RNA localization to Cajal bodies. Specifically recognizes and binds the Cajal body box (CAB box) present in both small Cajal body RNAs (scaRNAs) and telomerase RNA template component (TERC). Essential component of the telomerase holoenzyme complex, a ribonucleoprotein complex essential for the replication of chromosome termini that elongates telomeres in most eukaryotes. In the telomerase holoenzyme complex, required to stimulate the catalytic activity of the complex. Acts by specifically binding the CAB box of the TERC RNA and controlling the folding of the CR4/CR5 region of the TERC RNA, a critical step for telomerase activity. In addition, also controls telomerase holoenzyme complex localization to Cajal body. During S phase, required for delivery of TERC to telomeres during S phase and for telomerase activity. In addition to its role in telomere maintenance, also required for Cajal body formation, probably by mediating localization of scaRNAs to Cajal bodies. Also plays a role in DNA repair: phosphorylated by ATM in response to DNA damage and relocalizes to sites of DNA double-strand breaks to promote the repair of DNA double-strand breaks. Acts by recruiting the ubiquitin ligase RNF8 to DNA breaks and promote both homologous recombination (HR) and non-homologous end joining (NHEJ). The protein is Telomerase Cajal body protein 1 of Bos taurus (Bovine).